A 338-amino-acid polypeptide reads, in one-letter code: ATP synthase subunit a (338 aa).

A helical membrane pass occupies residues 15 to 35 (IAVLVMPLLLGFGAPIYAAAE). Positions 45-66 (AAAVHTDEAHGEAGEHAEGGHG) are disordered. Over residues 49–65 (HTDEAHGEAGEHAEGGH) the composition is skewed to basic and acidic residues. Transmembrane regions (helical) follow at residues 109 to 129 (HVVFMWLAALILLLVFGYVGN), 174 to 194 (LLTVFVFILVLNLLGLIPYGA), 199 to 219 (NINVTLTLSVFTFFITQVSAI), 238 to 258 (ALWIIMIPIEVIGLFTKPFAL), 262 to 282 (LFANMTAGHIIILSLIFISFI), 287 to 307 (IVAIFVSVPFSIFIYLLEIFV), and 308 to 328 (SFLQAFIFTMLSALFIGLGSA).

Belongs to the ATPase A chain family. In terms of assembly, F-type ATPases have 2 components, CF(1) - the catalytic core - and CF(0) - the membrane proton channel. CF(1) has five subunits: alpha(3), beta(3), gamma(1), delta(1), epsilon(1). CF(0) has four main subunits: a, b, b' and c.

The protein localises to the cell inner membrane. Key component of the proton channel; it plays a direct role in the translocation of protons across the membrane. The protein is ATP synthase subunit a of Chlorobium phaeobacteroides (strain BS1).